Reading from the N-terminus, the 301-residue chain is MTILIIPQDPSENGNPAVDTIPPLLFPRLKNSYSRRAARLRQLAAKNPLGDYLRFAAVIASAQEIVLYDHPLRMDPRARLEESARSGRPPLDINTLPRDAHWQRLLHSLIAELKPDMSGQALSVLENLEKSSSVELEAMAGALFSNEFSQVSSDKAPFIWAALSIYWAQMAALIPGKAYVKAGEQRQFCPVCGSVPVSSMIHVDGVRYLHCNLCESEWHVADAKCSNCEQTRDLHHWSLDSAAVKAESCGDCGTWLKRLYQEKDPAVEAVADDLATLILDARMEQEGFARSSLNPFLFPGE.

This sequence belongs to the FdhE family.

The protein localises to the cytoplasm. Its function is as follows. Necessary for formate dehydrogenase activity. In Erwinia tasmaniensis (strain DSM 17950 / CFBP 7177 / CIP 109463 / NCPPB 4357 / Et1/99), this protein is Protein FdhE homolog.